The sequence spans 592 residues: Methionine--tRNA ligase (592 aa).

The 'HIGH' region motif lies at 12-22 (PYANGPFHVGH). Positions 144, 147, 157, and 160 each coordinate Zn(2+). Residues 342–346 (KMSTS) carry the 'KMSKS' region motif. T345 serves as a coordination point for ATP.

It belongs to the class-I aminoacyl-tRNA synthetase family. MetG type 1 subfamily. In terms of assembly, monomer. Requires Zn(2+) as cofactor.

It is found in the cytoplasm. The enzyme catalyses tRNA(Met) + L-methionine + ATP = L-methionyl-tRNA(Met) + AMP + diphosphate. Is required not only for elongation of protein synthesis but also for the initiation of all mRNA translation through initiator tRNA(fMet) aminoacylation. The chain is Methionine--tRNA ligase from Roseiflexus castenholzii (strain DSM 13941 / HLO8).